The following is a 266-amino-acid chain: MRLIPLKSASQVGLWSARYIVDRINGFKPTADRPFVLGLPTGGTPLNTYKRLIELHKAGEVSFEHVATFNMDEYVGLPEDHPESYHSFMHNNFFCHIDIRPENINILNGNAEDLVAECKRYEDKIKSYGKINLFMGGVGNDGHIAFNEPASSLSSRTRVKTLTEDTRIANSRFFGGDMEQVPKLALTVGVGTLMDAEEIMILVTGHGKAQALQAAVEGSVNHMWTISTLQLHPKGMMVCDEPSTMELKVKTVRYFQQLEAANIGRL.

D72 functions as the Proton acceptor; for enolization step in the catalytic mechanism. D141 (for ring-opening step) is an active-site residue. H143 (proton acceptor; for ring-opening step) is an active-site residue. Catalysis depends on E148, which acts as the For ring-opening step.

Belongs to the glucosamine/galactosamine-6-phosphate isomerase family. NagB subfamily. In terms of assembly, homohexamer.

The catalysed reaction is alpha-D-glucosamine 6-phosphate + H2O = beta-D-fructose 6-phosphate + NH4(+). It functions in the pathway amino-sugar metabolism; N-acetylneuraminate degradation; D-fructose 6-phosphate from N-acetylneuraminate: step 5/5. Its activity is regulated as follows. Allosterically activated by N-acetylglucosamine 6-phosphate (GlcNAc6P). Functionally, catalyzes the reversible isomerization-deamination of glucosamine 6-phosphate (GlcN6P) to form fructose 6-phosphate (Fru6P) and ammonium ion. This Aeromonas salmonicida (strain A449) protein is Glucosamine-6-phosphate deaminase.